Here is a 174-residue protein sequence, read N- to C-terminus: Caltractin ICL1e (174 aa).

Residues 1–33 (MSKKQQAPVAQKPVGKQQQVNRKPQDRPGLTED) are disordered. EF-hand domains lie at 33 to 68 (DEIE…LGFD), 88 to 103 (IDFD…KLGN), 105 to 140 (ESRD…LGET), and 141 to 174 (MTAE…KRTF).

Belongs to the centrin family. As to quaternary structure, monomer.

The protein resides in the cytoplasm. Its subcellular location is the cytoskeleton. Plays a fundamental role in microtubule organizing center structure and function. Component of the infraciliary lattice (ICL) and the ciliary basal bodies. This Paramecium tetraurelia protein is Caltractin ICL1e (Icl1e).